A 180-amino-acid chain; its full sequence is Oligoribonuclease (180 aa).

The 162-residue stretch at 7–168 (LVWIDLEMTG…QDIRDSIDEL (162 aa)) folds into the Exonuclease domain. Y128 is a catalytic residue.

It belongs to the oligoribonuclease family.

The protein resides in the cytoplasm. Its function is as follows. 3'-to-5' exoribonuclease specific for small oligoribonucleotides. The polypeptide is Oligoribonuclease (Dichelobacter nodosus (strain VCS1703A)).